Consider the following 1023-residue polypeptide: Sodium/potassium-transporting ATPase subunit alpha-1 (1023 aa).

Positions 1–5 are excised as a propeptide; the sequence is MGKGV. Basic and acidic residues predominate over residues 1-11; sequence MGKGVGRDKYE. The segment at 1 to 38 is disordered; sequence MGKGVGRDKYEPAAVSEHGDKKSKKAKKERDMDELKKE. Topologically, residues 6 to 87 are cytoplasmic; it reads GRDKYEPAAV…NALTPPPTTP (82 aa). Lys-9 is modified (N6-acetyllysine). Tyr-10 is subject to Phosphotyrosine. Ser-16 is modified (phosphoserine; by PKC). Lys-21 bears the N6-acetyllysine mark. Ser-23 is subject to Phosphoserine; by PKC. Basic and acidic residues predominate over residues 28 to 38; it reads KERDMDELKKE. Ser-40 and Ser-47 each carry phosphoserine. The segment at 82-84 is phosphoinositide-3 kinase binding; the sequence is PPP. A helical transmembrane segment spans residues 88–108; that stretch reads EWVKFCRQLFGGFSMLLWIGA. At 109–131 the chain is on the extracellular side; sequence ILCFLAYGIRSATEEEPPNDDLY. The chain crosses the membrane as a helical span at residues 132 to 152; it reads LGVVLSAVVIITGCFSYYQEA. The Cytoplasmic portion of the chain corresponds to 153-288; sequence KSSKIMESFK…GGQTPIAEEI (136 aa). Positions 216–235 are disordered; it reads SSLTGESEPQTRSPDFTNEN. Ser-228 bears the Phosphoserine mark. A Phosphotyrosine modification is found at Tyr-260. The chain crosses the membrane as a helical span at residues 289–308; sequence EHFIHLITGVAVFLGVSFFI. Topologically, residues 309-320 are extracellular; sequence LSLILEYTWLEA. A helical membrane pass occupies residues 321–338; it reads VIFLIGIIVANVPEGLLA. The Cytoplasmic segment spans residues 339-772; the sequence is TVTVCLTLTA…EEGRLIFDNL (434 aa). Asp-376 functions as the 4-aspartylphosphate intermediate in the catalytic mechanism. Ser-452 and Ser-484 each carry phosphoserine. An ATP-binding site is contributed by Lys-487. Tyr-542 bears the Phosphotyrosine mark. The segment at 596–717 is mediates interaction with SCN7A; it reads RAAVPDAVGK…QGAIVAVTGD (122 aa). Lys-661 is modified (N6-succinyllysine). Phosphoserine occurs at positions 668 and 675. Positions 717 and 721 each coordinate Mg(2+). Residues 773-792 traverse the membrane as a helical segment; that stretch reads KKSIAYTLTSNIPEITPFLI. Residues 793-802 are Extracellular-facing; the sequence is FIIANIPLPL. A helical transmembrane segment spans residues 803–823; that stretch reads GTVTILCIDLGTDMVPAISLA. Over 824-843 the chain is Cytoplasmic; sequence YEQAESDIMKRQPRNPKTDK. Residues 844–866 traverse the membrane as a helical segment; sequence LVNERLISMAYGQIGMIQALGGF. At 867-918 the chain is on the extracellular side; the sequence is FTYFVILAENGFLPFHLLGIRETWDDRWINDVEDSYGQQWTYEQRKIVEFTC. The chain crosses the membrane as a helical span at residues 919 to 938; it reads HTAFFVSIVVVQWADLVICK. Residues 939 to 951 are Cytoplasmic-facing; that stretch reads TRRNSVFQQGMKN. Residue Ser-943 is modified to Phosphoserine; by PKA. The helical transmembrane segment at 952–970 threads the bilayer; that stretch reads KILIFGLFEETALAAFLSY. Topologically, residues 971–985 are extracellular; it reads CPGMGAALRMYPLKP. A helical membrane pass occupies residues 986 to 1006; the sequence is TWWFCAFPYSLLIFVYDEVRK. Residues 1007–1023 lie on the Cytoplasmic side of the membrane; sequence LIIRRRPGGWVEKETYY.

It belongs to the cation transport ATPase (P-type) (TC 3.A.3) family. Type IIC subfamily. As to quaternary structure, the sodium/potassium-transporting ATPase is composed of a catalytic alpha subunit, an auxiliary non-catalytic beta subunit and an additional regulatory subunit. Interacts with regulatory subunit FXYD1. Interacts with regulatory subunit FXYD3. Interacts with SLC35G1 and STIM1. Interacts with SIK1. Interacts with CLN3; this interaction regulates the sodium/potassium-transporting ATPase complex localization at the plasma membrane. Interacts with SCN7A; activates ATP1A1 P-type sodium:potassium-exchanging transporter activity which indirectly signals to nearby neurons to regulate sodium homeostasis. Phosphorylation on Tyr-10 modulates pumping activity. Phosphorylation of Ser-943 by PKA modulates the response of ATP1A1 to PKC. Dephosphorylation by protein phosphatase 2A (PP2A) following increases in intracellular sodium, leading to increase catalytic activity. Expressed in the central nervous system, in most motor and sensory axons of the ventral and dorsal roots, as well as in the large motor neurons of the ventral horn (at protein level).

Its subcellular location is the cell membrane. The protein resides in the basolateral cell membrane. It is found in the sarcolemma. It localises to the cell projection. The protein localises to the axon. Its subcellular location is the melanosome. It catalyses the reaction K(+)(out) + Na(+)(in) + ATP + H2O = K(+)(in) + Na(+)(out) + ADP + phosphate + H(+). In terms of biological role, this is the catalytic component of the active enzyme, which catalyzes the hydrolysis of ATP coupled with the exchange of sodium and potassium ions across the plasma membrane. This action creates the electrochemical gradient of sodium and potassium ions, providing the energy for active transport of various nutrients. Could also be part of an osmosensory signaling pathway that senses body-fluid sodium levels and controls salt intake behavior as well as voluntary water intake to regulate sodium homeostasis. The chain is Sodium/potassium-transporting ATPase subunit alpha-1 (Atp1a1) from Rattus norvegicus (Rat).